Here is a 325-residue protein sequence, read N- to C-terminus: Helicase VP6-A (325 aa).

Disordered regions lie at residues 1–122 and 185–230; these read MLLA…GATG and DLRR…EPAR. Composition is skewed to basic and acidic residues over residues 8-18, 32-54, 61-79, and 92-105; these read VIKRSSEELKQ, EGGKEDKTEPKEESKAEGSKDGE, GQKEEGGKETKDADVDRRI, and LGERANENADRGDG. Lys106 serves as a coordination point for ATP. Over residues 106 to 122 the composition is skewed to gly residues; it reads KVGGGGGDADAGVGATG. 2 stretches are compositionally biased toward basic and acidic residues: residues 185-203 and 211-229; these read DLRRKEKNGTHAKAVERGG and HGDAQREGVEEEKTSEEPA.

Belongs to the orbivirus VP6 family. In terms of assembly, homohexamer.

Its subcellular location is the virion. It carries out the reaction ATP + H2O = ADP + phosphate + H(+). Its function is as follows. ATP dependent RNA helicase essential for RNA packaging and viral transcription. Possesses ss- and dsRNA-binding capacity. The sequence is that of Helicase VP6-A (Segment-9) from Bluetongue virus 17 (isolate USA) (BTV 17).